The chain runs to 147 residues: Bis(5'-nucleosyl)-tetraphosphatase [asymmetrical] (147 aa).

The residue at position 2 (Ala2) is an N-acetylalanine. Residues 2-139 form the Nudix hydrolase domain; that stretch reads ALRACGLIIF…DMKAVLQEGH (138 aa). A Nudix box motif is present at residues 43 to 64; sequence GHVEPGESDLQTALRETQEEAG.

Belongs to the Nudix hydrolase family. A divalent metal cation serves as cofactor.

The enzyme catalyses P(1),P(4)-bis(5'-guanosyl) tetraphosphate + H2O = GMP + GTP + 2 H(+). It catalyses the reaction a 5'-end CoA-ribonucleoside in mRNA + H2O = a 5'-end phospho-adenosine-phospho-ribonucleoside in mRNA + (R)-4'-phosphopantetheine + 2 H(+). It carries out the reaction a 5'-end FAD-phospho-ribonucleoside in mRNA + H2O = a 5'-end phospho-adenosine-phospho-ribonucleoside in mRNA + FMN + 2 H(+). Inhibited by fluoride ions. Catalyzes the asymmetric hydrolysis of diadenosine 5',5'''-P1,P4-tetraphosphate (Ap4A) to yield AMP and ATP. Exhibits decapping activity towards FAD-capped RNAs and dpCoA-capped RNAs in vitro. This is Bis(5'-nucleosyl)-tetraphosphatase [asymmetrical] (NUDT2) from Sus scrofa (Pig).